A 529-amino-acid chain; its full sequence is Beta-glucosidase 11 (529 aa).

An N-terminal signal peptide occupies residues 1 to 25 (MAVAGAMVMSGALLLLHLLAFTCVA). Residues Q54, H157, and 202 to 203 (NE) each bind a beta-D-glucoside. The active-site Proton donor is the E203. Residues C222 and C230 are joined by a disulfide bond. Residue Y346 coordinates a beta-D-glucoside. A glycan (N-linked (GlcNAc...) asparagine) is linked at N361. E417 serves as a coordination point for a beta-D-glucoside. E417 acts as the Nucleophile in catalysis. The N-linked (GlcNAc...) asparagine glycan is linked to N425. A beta-D-glucoside is bound by residues W466, 473–474 (EW), and F482.

This sequence belongs to the glycosyl hydrolase 1 family.

The catalysed reaction is Hydrolysis of terminal, non-reducing beta-D-glucosyl residues with release of beta-D-glucose.. This chain is Beta-glucosidase 11 (BGLU11), found in Oryza sativa subsp. japonica (Rice).